A 58-amino-acid chain; its full sequence is Large ribosomal subunit protein bL32 (58 aa).

The protein belongs to the bacterial ribosomal protein bL32 family.

This chain is Large ribosomal subunit protein bL32, found in Ligilactobacillus salivarius (strain UCC118) (Lactobacillus salivarius).